The primary structure comprises 572 residues: Proline--tRNA ligase (572 aa).

This sequence belongs to the class-II aminoacyl-tRNA synthetase family. ProS type 1 subfamily. In terms of assembly, homodimer.

Its subcellular location is the cytoplasm. The catalysed reaction is tRNA(Pro) + L-proline + ATP = L-prolyl-tRNA(Pro) + AMP + diphosphate. Catalyzes the attachment of proline to tRNA(Pro) in a two-step reaction: proline is first activated by ATP to form Pro-AMP and then transferred to the acceptor end of tRNA(Pro). As ProRS can inadvertently accommodate and process non-cognate amino acids such as alanine and cysteine, to avoid such errors it has two additional distinct editing activities against alanine. One activity is designated as 'pretransfer' editing and involves the tRNA(Pro)-independent hydrolysis of activated Ala-AMP. The other activity is designated 'posttransfer' editing and involves deacylation of mischarged Ala-tRNA(Pro). The misacylated Cys-tRNA(Pro) is not edited by ProRS. In Yersinia pestis (strain Pestoides F), this protein is Proline--tRNA ligase.